Reading from the N-terminus, the 102-residue chain is Carboxysome shell protein CcmK3 (102 aa).

The BMC domain occupies 4–90 (AVGTIQTLGF…PQENVETVMP (87 aa)).

It belongs to the bacterial microcompartments protein family. CcmK subfamily. In terms of assembly, interacts stably with CcmK4, probably forms heterohexamers with a 1:2 CcmK3:CcmK4 stoichiometry. Bulky residues in the pore region probably preclude the formation of homohexamers by this subunit.

It is found in the carboxysome. In terms of biological role, a non-essential, minor shell protein of the carboxysome, a polyhedral inclusion where RuBisCO (ribulose bisphosphate carboxylase, rbcL-rbcS) is sequestered. Hexamers form sheets that form the facets of the polyhedral carboxysome. In PCC 7942 there are several CcmK paralogs with presumably functional differences. This subunit probably only makes heterohexamers with CcmK4. The CcmK3-CcmK4 heterohexmers have been suggested to cap other hexamers, perhaps to alter metabolite flux. The chain is Carboxysome shell protein CcmK3 from Synechococcus elongatus (strain ATCC 33912 / PCC 7942 / FACHB-805) (Anacystis nidulans R2).